The chain runs to 323 residues: Replication factor C subunit 4 (323 aa).

ATP-binding positions include V12, V24, 49-57 (GMPGIGKTT), N145, and R203.

The protein belongs to the activator 1 small subunits family. In terms of assembly, replication factor C (RFC) is a heteropentamer of subunits RFC1, RFC2, RFC3, RFC4 and RFC5 and forms a complex with POL30/PCNA in the presence of ATP. Component of the RAD24-RFC complex which consists of RAD14, RFC2, RFC3, RFC4 and RFC5 and associates with the checkpoint clamp DDC1:MEC3:RAD17 complex. Component of the ELG1-RFC complex which consists of ELG1, RFC2, RFC3, RFC4 and RFC5. Component of the CTF18-RFC complex, which consists of CTF18, CTF8, DCC1, RFC2, RFC3, RFC4 and RFC5. RFC4 interacts with ECO1.

It is found in the nucleus. In terms of biological role, component of ATP-dependent clamp loader (RFC and RFC-like) complexes for DNA clamps, such as the POL30/PCNA homotrimer and the checkpoint clamp DDC1:MEC3:RAD17 complex. During a clamp loading circle, the RFC:clamp complex binds to DNA and the recognition of the double-stranded/single-stranded junction stimulates ATP hydrolysis by RFC. The complex presumably provides bipartite ATP sites in which one subunit supplies a catalytic site for hydrolysis of ATP bound to the neighboring subunit. Dissociation of RFC from the clamp leaves the clamp encircling DNA. Component of the replication factor C (RFC or activator 1) complex which loads POL30/PCNA and acts during elongation of primed DNA templates by DNA polymerase delta and epsilon. RFC has an essential but redundant activity in sister chromatid cohesion establishment. Component of the RFC-like complex CTF18-RFC which is required for efficient establishment of chromosome cohesion during S-phase and may load or unload POL30/PCNA. Component of the RFC-like RAD24-RFC complex which loads the checkpoint clamp DDC1:MEC3:RAD17 complex and is involved in DNA repair pathways. Component of the RFC-like ELG1-RFC complex which appears to have a role in DNA replication, replication fork re-start, recombination and repair. The protein is Replication factor C subunit 4 (RFC4) of Saccharomyces cerevisiae (strain ATCC 204508 / S288c) (Baker's yeast).